A 393-amino-acid chain; its full sequence is Glutamyl-tRNA reductase (393 aa).

Substrate is bound by residues 47–50, serine 98, 103–105, and glutamine 109; these read TCGR and ETD. The Nucleophile role is filled by cysteine 48. Position 177–182 (177–182) interacts with NADP(+); that stretch reads GAGAVG.

Belongs to the glutamyl-tRNA reductase family. Homodimer.

The enzyme catalyses (S)-4-amino-5-oxopentanoate + tRNA(Glu) + NADP(+) = L-glutamyl-tRNA(Glu) + NADPH + H(+). Its pathway is porphyrin-containing compound metabolism; protoporphyrin-IX biosynthesis; 5-aminolevulinate from L-glutamyl-tRNA(Glu): step 1/2. Functionally, catalyzes the NADPH-dependent reduction of glutamyl-tRNA(Glu) to glutamate 1-semialdehyde (GSA). The sequence is that of Glutamyl-tRNA reductase from Pyrobaculum islandicum (strain DSM 4184 / JCM 9189 / GEO3).